The chain runs to 365 residues: MDDAAVLKRRGYIMGINLGEGSYAKVKSAYSERLKFNVAVKIIDRKKAPSDFLEKFLPREIEILAMLNHRSIVKTYEIFETSDGKVYIVMELGVQGDLLEFIKTRGALQEDDARKKFHQLSSAIKYCHDLDVVHRDLKCENLLLDKDFNIKLSDFGFSKRCLRDDSGRLILSKTFCGSAAYAAPEVLQGIPYQPKVYDIWSLGVILYIMVCGSMPYDDSNIKKMLRIQKEHRVNFPRSKHLTGECKDLIYRMLQPDVNRRLHIDEILNHCWVQPKARGLSSGAINKEGESSRATEPSWIPEPGADKKSATKLEPREEARSEARSESKPQEDTLQVVRQSENVGLSSELNRDTEEGHPQQPSETHT.

In terms of domain architecture, Protein kinase spans Y12–V272. ATP-binding positions include L18 to V26 and K41. The active-site Proton acceptor is the D136. Position 174 is a phosphothreonine (T174). Positions G282 to T365 are disordered. Over residues G303–E330 the composition is skewed to basic and acidic residues. Polar residues predominate over residues D331–E347.

This sequence belongs to the protein kinase superfamily. CAMK Ser/Thr protein kinase family. As to quaternary structure, interacts with TSSK2. Interacts with HSP90; this interaction stabilizes TSSK1. The cofactor is Mg(2+). Post-translationally, autophosphorylated. Ubiquitinated; HSP90 activity negatively regulates ubiquitination and degradation. Testis-specific. Expressed only in postmeiotic spermatids at the final stages of cytodifferentiation in the seminiferous tubules (at protein level). Not detected in released sperms in the lumen of the seminiferous tubules and the epididymis.

It is found in the cytoplasm. The protein localises to the cytoplasmic vesicle. The protein resides in the secretory vesicle. Its subcellular location is the acrosome. It localises to the cell projection. It is found in the cilium. The protein localises to the flagellum. It catalyses the reaction L-seryl-[protein] + ATP = O-phospho-L-seryl-[protein] + ADP + H(+). It carries out the reaction L-threonyl-[protein] + ATP = O-phospho-L-threonyl-[protein] + ADP + H(+). With respect to regulation, activated by phosphorylation on Thr-174, potentially by autophosphorylation. Testis-specific serine/threonine-protein kinase required during spermatid development. Phosphorylates 'Ser-281' of TSKS. Involved in the late stages of spermatogenesis, during the reconstruction of the cytoplasm. During spermatogenesis, required for the transformation of a ring-shaped structure around the base of the flagellum originating from the chromatoid body. The protein is Testis-specific serine/threonine-protein kinase 1 (Tssk1b) of Mus musculus (Mouse).